The sequence spans 119 residues: Large ribosomal subunit protein eL31y (119 aa).

It belongs to the eukaryotic ribosomal protein eL31 family.

The chain is Large ribosomal subunit protein eL31y (RPL31B) from Arabidopsis thaliana (Mouse-ear cress).